Here is a 62-residue protein sequence, read N- to C-terminus: MSERQGAGATNGKDKTSGENDGQKKVQEEFDIDMDAPETERAAVAIQSQFRKFQKKKAGSQS.

Residues 1–39 (MSERQGAGATNGKDKTSGENDGQKKVQEEFDIDMDAPET) are disordered. Positions 12–28 (GKDKTSGENDGQKKVQE) are enriched in basic and acidic residues. The segment at 28-40 (EEFDIDMDAPETE) is acidic; binds calcium and is required for modulating the calcium-binding kinetics of calmodulin. One can recognise an IQ domain in the interval 39–62 (TERAAVAIQSQFRKFQKKKAGSQS).

Belongs to the PCP4 family. In terms of assembly, binds to both calcium-free and calcium-bound calmodulin. The affinity for the calcium-bound form is 50-fold greater.

Functions as a modulator of calcium-binding by calmodulin. Thereby, regulates calmodulin activity and the different processes it controls. For instance, may play a role in neuronal differentiation through activation of calmodulin-dependent kinase signaling pathways. The chain is Calmodulin regulator protein PCP4 from Homo sapiens (Human).